The following is a 303-amino-acid chain: N-acetyl-D-glucosamine kinase (303 aa).

Residues 4-11 (GFDIGGTK) and 133-140 (GVGGGLVL) contribute to the ATP site. Zn(2+) is bound by residues histidine 157, cysteine 177, cysteine 179, and cysteine 184.

This sequence belongs to the ROK (NagC/XylR) family. NagK subfamily.

It catalyses the reaction N-acetyl-D-glucosamine + ATP = N-acetyl-D-glucosamine 6-phosphate + ADP + H(+). Its pathway is cell wall biogenesis; peptidoglycan recycling. Functionally, catalyzes the phosphorylation of N-acetyl-D-glucosamine (GlcNAc) derived from cell-wall degradation, yielding GlcNAc-6-P. The chain is N-acetyl-D-glucosamine kinase from Salmonella dublin (strain CT_02021853).